Consider the following 860-residue polypeptide: Nuclear cap-binding protein complex subunit 1 (860 aa).

The 236-residue stretch at 36–271 (CKDMLPDIRT…SNVKNALAND (236 aa)) folds into the MIF4G domain.

It belongs to the NCBP1 family. In terms of assembly, component of the nuclear cap-binding complex (CBC).

The protein resides in the nucleus. In terms of biological role, component of the cap-binding complex (CBC) involved in the nuclear export of capped U snRNAs. The CBC complex is required for efficient pre-mRNA splicing through efficient commitment complex and spliceosome formation; and involved in rRNA processing at sites A0, A1 and A2. The polypeptide is Nuclear cap-binding protein complex subunit 1 (CBC1) (Eremothecium gossypii (strain ATCC 10895 / CBS 109.51 / FGSC 9923 / NRRL Y-1056) (Yeast)).